The chain runs to 357 residues: Aminomethyltransferase (357 aa).

It belongs to the GcvT family. As to quaternary structure, the glycine cleavage system is composed of four proteins: P, T, L and H.

The catalysed reaction is N(6)-[(R)-S(8)-aminomethyldihydrolipoyl]-L-lysyl-[protein] + (6S)-5,6,7,8-tetrahydrofolate = N(6)-[(R)-dihydrolipoyl]-L-lysyl-[protein] + (6R)-5,10-methylene-5,6,7,8-tetrahydrofolate + NH4(+). In terms of biological role, the glycine cleavage system catalyzes the degradation of glycine. In Deinococcus deserti (strain DSM 17065 / CIP 109153 / LMG 22923 / VCD115), this protein is Aminomethyltransferase.